The primary structure comprises 338 residues: Anthranilate phosphoribosyltransferase (338 aa).

5-phospho-alpha-D-ribose 1-diphosphate-binding positions include G81, 84-85, S89, 91-94, 109-117, and A121; these read GD, NVST, and KHGNRALSS. Residue G81 coordinates anthranilate. Position 93 (S93) interacts with Mg(2+). N112 lines the anthranilate pocket. R167 is an anthranilate binding site. Mg(2+)-binding residues include D226 and E227.

Belongs to the anthranilate phosphoribosyltransferase family. Homodimer. Mg(2+) is required as a cofactor.

It catalyses the reaction N-(5-phospho-beta-D-ribosyl)anthranilate + diphosphate = 5-phospho-alpha-D-ribose 1-diphosphate + anthranilate. It functions in the pathway amino-acid biosynthesis; L-tryptophan biosynthesis; L-tryptophan from chorismate: step 2/5. Catalyzes the transfer of the phosphoribosyl group of 5-phosphorylribose-1-pyrophosphate (PRPP) to anthranilate to yield N-(5'-phosphoribosyl)-anthranilate (PRA). The polypeptide is Anthranilate phosphoribosyltransferase (Rhodopseudomonas palustris (strain ATCC BAA-98 / CGA009)).